A 105-amino-acid chain; its full sequence is Large ribosomal subunit protein uL24 (105 aa).

The protein belongs to the universal ribosomal protein uL24 family. Part of the 50S ribosomal subunit.

Its function is as follows. One of two assembly initiator proteins, it binds directly to the 5'-end of the 23S rRNA, where it nucleates assembly of the 50S subunit. One of the proteins that surrounds the polypeptide exit tunnel on the outside of the subunit. This chain is Large ribosomal subunit protein uL24, found in Chromohalobacter salexigens (strain ATCC BAA-138 / DSM 3043 / CIP 106854 / NCIMB 13768 / 1H11).